Consider the following 303-residue polypeptide: Quinolinate synthase (303 aa).

Iminosuccinate contacts are provided by His25 and Ser42. Residue Cys87 participates in [4Fe-4S] cluster binding. Iminosuccinate contacts are provided by residues 113–115 and Ser130; that span reads YVN. [4Fe-4S] cluster is bound at residue Cys174. Residues 200 to 202 and Thr217 contribute to the iminosuccinate site; that span reads HPE. Position 260 (Cys260) interacts with [4Fe-4S] cluster.

It belongs to the quinolinate synthase family. Type 2 subfamily. As to quaternary structure, homodimer. [4Fe-4S] cluster is required as a cofactor.

Its subcellular location is the cytoplasm. It carries out the reaction iminosuccinate + dihydroxyacetone phosphate = quinolinate + phosphate + 2 H2O + H(+). It functions in the pathway cofactor biosynthesis; NAD(+) biosynthesis; quinolinate from iminoaspartate: step 1/1. Functionally, catalyzes the condensation of iminoaspartate with dihydroxyacetone phosphate to form quinolinate. This Pyrococcus furiosus (strain ATCC 43587 / DSM 3638 / JCM 8422 / Vc1) protein is Quinolinate synthase.